A 421-amino-acid polypeptide reads, in one-letter code: 3-isopropylmalate dehydratase large subunit (421 aa).

[4Fe-4S] cluster is bound by residues Cys302, Cys362, and Cys365.

The protein belongs to the aconitase/IPM isomerase family. LeuC type 2 subfamily. Heterodimer of LeuC and LeuD. Requires [4Fe-4S] cluster as cofactor.

The catalysed reaction is (2R,3S)-3-isopropylmalate = (2S)-2-isopropylmalate. It functions in the pathway amino-acid biosynthesis; L-leucine biosynthesis; L-leucine from 3-methyl-2-oxobutanoate: step 2/4. In terms of biological role, catalyzes the isomerization between 2-isopropylmalate and 3-isopropylmalate, via the formation of 2-isopropylmaleate. In Campylobacter curvus (strain 525.92), this protein is 3-isopropylmalate dehydratase large subunit.